The sequence spans 86 residues: Small ribosomal subunit protein bS16 (86 aa).

It belongs to the bacterial ribosomal protein bS16 family.

This Bordetella bronchiseptica (strain ATCC BAA-588 / NCTC 13252 / RB50) (Alcaligenes bronchisepticus) protein is Small ribosomal subunit protein bS16.